We begin with the raw amino-acid sequence, 121 residues long: Large ribosomal subunit protein bL12 (121 aa).

The protein belongs to the bacterial ribosomal protein bL12 family. As to quaternary structure, homodimer. Part of the ribosomal stalk of the 50S ribosomal subunit. Forms a multimeric L10(L12)X complex, where L10 forms an elongated spine to which 2 to 4 L12 dimers bind in a sequential fashion. Binds GTP-bound translation factors.

In terms of biological role, forms part of the ribosomal stalk which helps the ribosome interact with GTP-bound translation factors. Is thus essential for accurate translation. In Shewanella baltica (strain OS223), this protein is Large ribosomal subunit protein bL12.